A 526-amino-acid chain; its full sequence is Lysine--tRNA ligase (526 aa).

Mg(2+) contacts are provided by Glu-431 and Glu-438.

The protein belongs to the class-II aminoacyl-tRNA synthetase family. As to quaternary structure, homodimer. Mg(2+) serves as cofactor.

The protein resides in the cytoplasm. The catalysed reaction is tRNA(Lys) + L-lysine + ATP = L-lysyl-tRNA(Lys) + AMP + diphosphate. The chain is Lysine--tRNA ligase from Chlamydia trachomatis serovar L2b (strain UCH-1/proctitis).